A 379-amino-acid chain; its full sequence is Phospho-N-acetylmuramoyl-pentapeptide-transferase (379 aa).

10 consecutive transmembrane segments (helical) span residues 27-47, 76-96, 100-120, 135-155, 185-205, 218-238, 255-275, 283-303, 307-327, and 356-376; these read FRTAFASLTALFMGLIIGPAV, TMGGVLITIAIIVPTLLWADL, FVWIAMLATIAFGAIGFTDDY, AKMGLQILVAILVAISLVLVQ, PHIWIIAYIPFLAFVAIVLVG, GLAIGCTVIAAGALTVLTYVS, VGELSIFCGAMVGSAIGFLWY, FMGDVGSLALGGAIGTVAVII, LLLPFIGGVFVLEALSVILQV, and KIIVRFWIASLVFALFALTTL.

The protein belongs to the glycosyltransferase 4 family. MraY subfamily. The cofactor is Mg(2+).

It is found in the cell inner membrane. It catalyses the reaction UDP-N-acetyl-alpha-D-muramoyl-L-alanyl-gamma-D-glutamyl-meso-2,6-diaminopimeloyl-D-alanyl-D-alanine + di-trans,octa-cis-undecaprenyl phosphate = di-trans,octa-cis-undecaprenyl diphospho-N-acetyl-alpha-D-muramoyl-L-alanyl-D-glutamyl-meso-2,6-diaminopimeloyl-D-alanyl-D-alanine + UMP. It participates in cell wall biogenesis; peptidoglycan biosynthesis. Its function is as follows. Catalyzes the initial step of the lipid cycle reactions in the biosynthesis of the cell wall peptidoglycan: transfers peptidoglycan precursor phospho-MurNAc-pentapeptide from UDP-MurNAc-pentapeptide onto the lipid carrier undecaprenyl phosphate, yielding undecaprenyl-pyrophosphoryl-MurNAc-pentapeptide, known as lipid I. This is Phospho-N-acetylmuramoyl-pentapeptide-transferase from Koribacter versatilis (strain Ellin345).